The primary structure comprises 102 residues: Small ribosomal subunit protein uS10 (102 aa).

The protein belongs to the universal ribosomal protein uS10 family. As to quaternary structure, part of the 30S ribosomal subunit.

Functionally, involved in the binding of tRNA to the ribosomes. This Opitutus terrae (strain DSM 11246 / JCM 15787 / PB90-1) protein is Small ribosomal subunit protein uS10.